Consider the following 93-residue polypeptide: Em protein H2 (93 aa).

The interval 1–93 (MASGQQERSQ…IDESKFKTKS (93 aa)) is disordered. Basic and acidic residues-rich tracts occupy residues 9–19 (SQLDRKAREGE), 31–52 (LEAH…REQM), and 73–93 (GGER…KTKS).

This sequence belongs to the small hydrophilic plant seed protein family.

Its function is as follows. It is thought to provide protection for the cytoplasm during the desiccation stage of embryo development. This chain is Em protein H2 (EMH2), found in Triticum aestivum (Wheat).